Reading from the N-terminus, the 355-residue chain is Replication-associated protein (355 aa).

One can recognise a CRESS-DNA virus Rep endonuclease domain in the interval 11–114; the sequence is LHRTANTFLT…PLALFERGTF (104 aa). The short motif at 18–21 is the RCR-1 element; sequence FLTY. 3 residues coordinate a divalent metal cation: Glu-52, His-60, and His-62. An RCR-2 motif is present at residues 60–62; it reads HLH. Catalysis depends on Tyr-100, which acts as the For DNA cleavage activity. Positions 100–103 match the RCR-3 motif; sequence YILK. Glu-104 contributes to the a divalent metal cation binding site. An oligomerization region spans residues 175–187; sequence SANKLFPDIQEEF. An ATP-binding site is contributed by 229 to 236; it reads GPTRTGKS. Residues 252–270 form a transactivation region; sequence VDWSSYNEDAIYNIVDDIP. Residues 292 to 303 carry the Nuclear localization signal motif; it reads KYGKKKKVQMKS.

The protein belongs to the geminiviridae Rep protein family. In terms of assembly, homooligomer. Rep binds to repeated DNA motifs (iterons). Forms the O-complex, which is a Rep-DNA complex involved in the initiation of RCR. Part of the C- and V-complexes which are RepA-Rep-DNA complexes involved in the c-sense and v-sense transcription. Mg(2+) is required as a cofactor. The cofactor is Mn(2+).

It is found in the host nucleus. In terms of biological role, essential for the replication of viral ssDNA. The closed circular ssDNA genome is first converted to a superhelical dsDNA. Rep binds a specific region at the genome origin of replication. It introduces an endonucleolytic nick within the conserved sequence 5'-TAATATTAC-3' in the intergenic region of the genome present in all geminiviruses, thereby initiating the rolling circle replication (RCR). Following cleavage, binds covalently to the 5'-phosphate of DNA as a tyrosyl ester. The cleavage gives rise to a free 3'-OH that serves as a primer for the cellular DNA polymerase. The polymerase synthesizes the (+) strand DNA by rolling circle mechanism. After one round of replication, a Rep-catalyzed nucleotidyl transfer reaction releases a circular single-stranded virus genome, thereby terminating the replication. Displays origin-specific DNA cleavage, nucleotidyl transferase, ATPase and helicase activities. Acts as an inhibitor of C-sense gene transcription. The chain is Replication-associated protein from Maize streak virus genotype D (isolate Raw) (MSV).